Consider the following 469-residue polypeptide: uncharacterized protein (469 aa).

This is an uncharacterized protein from Methanocaldococcus jannaschii (strain ATCC 43067 / DSM 2661 / JAL-1 / JCM 10045 / NBRC 100440) (Methanococcus jannaschii).